We begin with the raw amino-acid sequence, 171 residues long: Crossover junction endodeoxyribonuclease RuvC (171 aa).

Active-site residues include Asp-7, Glu-66, and Asp-138. Mg(2+) is bound by residues Asp-7, Glu-66, and Asp-138.

This sequence belongs to the RuvC family. Homodimer which binds Holliday junction (HJ) DNA. The HJ becomes 2-fold symmetrical on binding to RuvC with unstacked arms; it has a different conformation from HJ DNA in complex with RuvA. In the full resolvosome a probable DNA-RuvA(4)-RuvB(12)-RuvC(2) complex forms which resolves the HJ. Requires Mg(2+) as cofactor.

The protein resides in the cytoplasm. The catalysed reaction is Endonucleolytic cleavage at a junction such as a reciprocal single-stranded crossover between two homologous DNA duplexes (Holliday junction).. The RuvA-RuvB-RuvC complex processes Holliday junction (HJ) DNA during genetic recombination and DNA repair. Endonuclease that resolves HJ intermediates. Cleaves cruciform DNA by making single-stranded nicks across the HJ at symmetrical positions within the homologous arms, yielding a 5'-phosphate and a 3'-hydroxyl group; requires a central core of homology in the junction. The consensus cleavage sequence is 5'-(A/T)TT(C/G)-3'. Cleavage occurs on the 3'-side of the TT dinucleotide at the point of strand exchange. HJ branch migration catalyzed by RuvA-RuvB allows RuvC to scan DNA until it finds its consensus sequence, where it cleaves and resolves the cruciform DNA. The polypeptide is Crossover junction endodeoxyribonuclease RuvC (Francisella philomiragia subsp. philomiragia (strain ATCC 25017 / CCUG 19701 / FSC 153 / O#319-036)).